The following is a 516-amino-acid chain: Na(+)/H(+) antiporter NhaB (516 aa).

Helical transmembrane passes span 23-43 (LALIIFLIVNPLVFAVAPFVA), 61-80 (CYPLLPGGLLAIEALLIGMT), 97-117 (LLLIFMVAGIYFMKQLLLFVF), 120-140 (LLLGIRSKMLLSLAFCLAAAF), 144-164 (FLDALTVVAVVISVAVGFYGI), 202-222 (LMMHAGVGTALGGVMTMVGEP), 238-258 (FFIRMAPVTVPVMVCGLLTCL), 303-323 (AVIGVWLIVALAFHLAEVGLI), 348-368 (TEALPFTALLTVFFAIVAVII), 391-411 (LFYLFNGLLSSISDNVFVGTV), 447-467 (ATPNGQAAFLFLLTSALAPLI), and 475-495 (VWMALPYTLVLTLVGLLCVEF).

It belongs to the NhaB Na(+)/H(+) (TC 2.A.34) antiporter family.

The protein localises to the cell inner membrane. It carries out the reaction 2 Na(+)(in) + 3 H(+)(out) = 2 Na(+)(out) + 3 H(+)(in). In terms of biological role, na(+)/H(+) antiporter that extrudes sodium in exchange for external protons. The chain is Na(+)/H(+) antiporter NhaB from Klebsiella pneumoniae (strain 342).